We begin with the raw amino-acid sequence, 652 residues long: Phosphomethylpyrimidine synthase (652 aa).

Residues Asn-257, Met-286, Tyr-315, His-351, 371–373 (SRG), 412–415 (DGLR), and Glu-451 contribute to the substrate site. His-455 is a binding site for Zn(2+). Residue Tyr-478 coordinates substrate. Zn(2+) is bound at residue His-519. Residues Cys-599, Cys-602, and Cys-607 each contribute to the [4Fe-4S] cluster site.

It belongs to the ThiC family. As to quaternary structure, homodimer. [4Fe-4S] cluster is required as a cofactor.

It catalyses the reaction 5-amino-1-(5-phospho-beta-D-ribosyl)imidazole + S-adenosyl-L-methionine = 4-amino-2-methyl-5-(phosphooxymethyl)pyrimidine + CO + 5'-deoxyadenosine + formate + L-methionine + 3 H(+). The protein operates within cofactor biosynthesis; thiamine diphosphate biosynthesis. Functionally, catalyzes the synthesis of the hydroxymethylpyrimidine phosphate (HMP-P) moiety of thiamine from aminoimidazole ribotide (AIR) in a radical S-adenosyl-L-methionine (SAM)-dependent reaction. The protein is Phosphomethylpyrimidine synthase of Thiobacillus denitrificans (strain ATCC 25259 / T1).